A 156-amino-acid chain; its full sequence is Ribosomal RNA large subunit methyltransferase H (156 aa).

S-adenosyl-L-methionine contacts are provided by residues leucine 73, glycine 104, and 123 to 128; that span reads LSALTL.

It belongs to the RNA methyltransferase RlmH family. As to quaternary structure, homodimer.

It localises to the cytoplasm. It carries out the reaction pseudouridine(1915) in 23S rRNA + S-adenosyl-L-methionine = N(3)-methylpseudouridine(1915) in 23S rRNA + S-adenosyl-L-homocysteine + H(+). Functionally, specifically methylates the pseudouridine at position 1915 (m3Psi1915) in 23S rRNA. The sequence is that of Ribosomal RNA large subunit methyltransferase H from Shewanella sp. (strain ANA-3).